Reading from the N-terminus, the 338-residue chain is Heat-inducible transcription repressor HrcA (338 aa).

This sequence belongs to the HrcA family.

Functionally, negative regulator of class I heat shock genes (grpE-dnaK-dnaJ and groELS operons). Prevents heat-shock induction of these operons. The protein is Heat-inducible transcription repressor HrcA of Bacillus mycoides (strain KBAB4) (Bacillus weihenstephanensis).